Here is a 304-residue protein sequence, read N- to C-terminus: Ubiquitin thioesterase OTU1 (304 aa).

The interval 5–83 (RCKTREGTQL…IVEEDKSKLR (79 aa)) is UBX-like. In terms of domain architecture, OTU spans 105–230 (IVRRVVPADN…GIHYDPLQRQ (126 aa)). Residues 110–116 (VPADNSC) form a cys-loop region. Asp-113 is a catalytic residue. Cys-116 (nucleophile) is an active-site residue. The segment at 169–179 (IRREDTWGGAI) is variable-loop. Residues 219–223 (YDGIH) form a his-loop region. Residue Ile-222 coordinates substrate. The active site involves His-223. Residues 247–252 (DEALVQ) are S2 site. The C2H2-type zinc-finger motif lies at 274–298 (LRCMACQKGLTGQSAARDHAKETGH). The active site involves His-298.

The protein resides in the cytoplasm. It carries out the reaction Thiol-dependent hydrolysis of ester, thioester, amide, peptide and isopeptide bonds formed by the C-terminal Gly of ubiquitin (a 76-residue protein attached to proteins as an intracellular targeting signal).. In terms of biological role, hydrolase that can remove conjugated ubiquitin from proteins and participates in endoplasmic reticulum-associated degradation (ERAD) for misfolded lumenal proteins. May act by triming the ubiquitin chain on the associated substrate to facilitate their threading through the VCP/p97 pore. Ubiquitin moieties on substrates may present a steric impediment to the threading process when the substrate is transferred to the VCP pore and threaded through VCP's axial channel. Mediates deubiquitination of 'Lys-27'-, 'Lys-29'- and 'Lys-33'-linked polyubiquitin chains. Also able to hydrolyze 'Lys-11'-linked ubiquitin chains. Cleaves both polyubiquitin and di-ubiquitin. In Xenopus laevis (African clawed frog), this protein is Ubiquitin thioesterase OTU1 (yod1).